Consider the following 352-residue polypeptide: Phenylalanine--tRNA ligase alpha subunit (352 aa).

E258 is a Mg(2+) binding site.

The protein belongs to the class-II aminoacyl-tRNA synthetase family. Phe-tRNA synthetase alpha subunit type 1 subfamily. In terms of assembly, tetramer of two alpha and two beta subunits. It depends on Mg(2+) as a cofactor.

It is found in the cytoplasm. The catalysed reaction is tRNA(Phe) + L-phenylalanine + ATP = L-phenylalanyl-tRNA(Phe) + AMP + diphosphate + H(+). The protein is Phenylalanine--tRNA ligase alpha subunit of Staphylococcus aureus (strain Mu3 / ATCC 700698).